The primary structure comprises 83 residues: U5-theraphotoxin-Hs1b 1 (83 aa).

The signal sequence occupies residues 1 to 21 (MKTSMFLTLTGLVLLFVVCYA). Positions 22-49 (SESEEKEFPKELLSSIFAADSDFKEEER) are excised as a propeptide. 3 cysteine pairs are disulfide-bonded: C51–C63, C56–C68, and C62–C75.

Belongs to the neurotoxin 10 (Hwtx-1) family. 51 (Hntx-8) subfamily. Hntx-8 sub-subfamily. In terms of tissue distribution, expressed by the venom gland.

Its subcellular location is the secreted. Weakly inhibits 5HT3A receptors and Kv1.3/KCNA3 voltage-gated potassium channels. Agglutinates erythrocytes. The sequence is that of U5-theraphotoxin-Hs1b 1 from Cyriopagopus schmidti (Chinese bird spider).